The primary structure comprises 1617 residues: Mitogen-activated protein kinase kinae kinase bck1 (1617 aa).

Disordered regions lie at residues 1–73 (MDGQ…SQLQ), 167–199 (GPVH…RTMP), 211–253 (SVAS…GGMS), 345–399 (RQIH…SPNL), 455–555 (DHRR…SSSY), 568–633 (KRSK…LRGK), 739–820 (GVPL…ISPE), 832–1144 (EHKR…RGDI), and 1165–1277 (IDLD…EILR). Residues 19–28 (TQPSQSHMLS) are compositionally biased toward low complexity. Pro residues predominate over residues 44–60 (VMPPPPPGPPPGPPPGP). Over residues 220-248 (TAQNHQSQTGQTNEPTKSPSHRQNNSNTL) the composition is skewed to polar residues. Residues 482-504 (KSGSPATQHATLNQGLSSSSTGD) are compositionally biased toward polar residues. Over residues 524–533 (RYYESRKGQE) the composition is skewed to basic and acidic residues. Polar residues-rich tracts occupy residues 535-555 (IRPS…SSSY) and 586-596 (ESPTSPVNLRQ). 2 stretches are compositionally biased toward basic and acidic residues: residues 832 to 841 (EHKREVERKQ) and 871 to 885 (FDER…KKAD). Polar residues-rich tracts occupy residues 897–907 (PQESYTLTRIN) and 956–980 (GGKQ…PQSS). Basic and acidic residues-rich tracts occupy residues 1128–1140 (EDER…DSFA) and 1189–1198 (PENDLHKKEN). 2 stretches are compositionally biased toward polar residues: residues 1199 to 1208 (QPSSSYTGEM) and 1257 to 1272 (NQAS…NQKS). The Protein kinase domain maps to 1323 to 1596 (IIRGQLIGKG…QTLLTRHPFC (274 aa)). ATP-binding positions include 1329–1337 (IGKGTYGRV) and K1352.

The protein belongs to the protein kinase superfamily. STE Ser/Thr protein kinase family. MAP kinase kinase kinase subfamily.

It carries out the reaction L-seryl-[protein] + ATP = O-phospho-L-seryl-[protein] + ADP + H(+). The catalysed reaction is L-threonyl-[protein] + ATP = O-phospho-L-threonyl-[protein] + ADP + H(+). Mitogen-activated protein kinase kinase kinase; part of cell wall integrity (CWI) signaling pathway composed of pkcA, the bck1-mkk2-mpka MAPK cascade and the downstream rlmA transcription regulator. The CWI signaling pathway regulates cell wall integrity and pyomelanin formation. CWI also controls oxidative stress response, gliotoxin production, iron adaptation and asexual development. Finally, CWI is constitutively required for A.fumigatus to cope with the temperature increase found in the mammalian lung environment, during infection. The chain is Mitogen-activated protein kinase kinae kinase bck1 from Aspergillus fumigatus (strain ATCC MYA-4609 / CBS 101355 / FGSC A1100 / Af293) (Neosartorya fumigata).